The primary structure comprises 421 residues: Phosphoribosylamine--glycine ligase (421 aa).

One can recognise an ATP-grasp domain in the interval 108–314; that stretch reads KEIMVKYNVP…FAQNIDDIMM (207 aa). Residue 134–195 participates in ATP binding; it reads IEEQGAPIVV…EEFLDGEEFS (62 aa). Residues E284 and N286 each contribute to the Mg(2+) site.

Belongs to the GARS family. Mg(2+) serves as cofactor. The cofactor is Mn(2+).

The enzyme catalyses 5-phospho-beta-D-ribosylamine + glycine + ATP = N(1)-(5-phospho-beta-D-ribosyl)glycinamide + ADP + phosphate + H(+). It participates in purine metabolism; IMP biosynthesis via de novo pathway; N(1)-(5-phospho-D-ribosyl)glycinamide from 5-phospho-alpha-D-ribose 1-diphosphate: step 2/2. This is Phosphoribosylamine--glycine ligase from Streptococcus pyogenes serotype M3 (strain SSI-1).